Consider the following 326-residue polypeptide: Biotin synthase (326 aa).

Residues 41-271 enclose the Radical SAM core domain; it reads YHVQLASLLS…EARVRLSAGR (231 aa). Residues Cys56, Cys60, and Cys63 each coordinate [4Fe-4S] cluster. Residues Cys102, Cys134, Cys194, and Arg266 each coordinate [2Fe-2S] cluster.

It belongs to the radical SAM superfamily. Biotin synthase family. Homodimer. It depends on [4Fe-4S] cluster as a cofactor. [2Fe-2S] cluster is required as a cofactor.

It carries out the reaction (4R,5S)-dethiobiotin + (sulfur carrier)-SH + 2 reduced [2Fe-2S]-[ferredoxin] + 2 S-adenosyl-L-methionine = (sulfur carrier)-H + biotin + 2 5'-deoxyadenosine + 2 L-methionine + 2 oxidized [2Fe-2S]-[ferredoxin]. Its pathway is cofactor biosynthesis; biotin biosynthesis; biotin from 7,8-diaminononanoate: step 2/2. Functionally, catalyzes the conversion of dethiobiotin (DTB) to biotin by the insertion of a sulfur atom into dethiobiotin via a radical-based mechanism. The chain is Biotin synthase from Synechococcus sp. (strain RCC307).